A 560-amino-acid polypeptide reads, in one-letter code: MNNNIINLVAAIILSLSIIFGWQYFVVKPEQKKQQQQIAVQKAENLKKQQLKALVEPATGIVVQEESQIQRIKIESESLTGSISLKGLRFDDLILKKYKQDLSKNSPEVRLFSPSNTENAYFAEIGLVSNLSSVKLPNNDTIWNSDSEILSPEKPVHLFWVNEDGVKFLVTITVDENYLFTIEQTIVNYSDKELPVQSYGLINRKYIAVEKAVNILHQGPIGCIDENLKEYSYDDIKDKKSEKFAASKVDWIGITDKYWLSSLIPDKSSNYSSNFNYALKQGTERYQVDFISPVQIIKPGENFSIKSRIFAGAKKVDLLDKYEKQYDIKLFDRAIDFGWFYIITKPVFYAMNFFYGYVGNFGVSILIVTVIIKLLMFTLANKSYRSMKKMKNLQPEIDRIKNLYSDDKARLNQEIMALYKKEKVNPVAGCLPILVQIPVFFSIYKVLYVTIEMRQTPFYGWIKDLSAPDPTTIFNLFGLLPFSPPSFLMIGAWPILMAITMFLQQKMSPEPADPMQAQVMKFMPLIFLFMFSSFPVGLLIYWSWNNILSIIQQYYINKFN.

The next 6 helical transmembrane spans lie at 5–25 (IINL…WQYF), 334–354 (AIDF…MNFF), 357–377 (YVGN…LLMF), 431–451 (LPIL…YVTI), 476–496 (LFGL…WPIL), and 522–542 (FMPL…LIYW).

The protein belongs to the OXA1/ALB3/YidC family. Type 1 subfamily. Interacts with the Sec translocase complex via SecD. Specifically interacts with transmembrane segments of nascent integral membrane proteins during membrane integration.

It is found in the cell inner membrane. Required for the insertion and/or proper folding and/or complex formation of integral membrane proteins into the membrane. Involved in integration of membrane proteins that insert both dependently and independently of the Sec translocase complex, as well as at least some lipoproteins. Aids folding of multispanning membrane proteins. This is Membrane protein insertase YidC from Rickettsia massiliae (strain Mtu5).